Reading from the N-terminus, the 345-residue chain is Baculoviral IAP repeat-containing protein 7-B (345 aa).

BIR repeat units lie at residues 46-112 (RQRS…PFLQ) and 154-219 (RLGS…DFLL). Residues Cys-188, Cys-191, His-208, and Cys-215 each coordinate Zn(2+). Ser-237 is subject to Phosphoserine. Position 241 is a phosphoserine; by MAPK1 (Ser-241). Position 253 is a phosphoserine (Ser-253). Ser-257 bears the Phosphoserine; by MAPK1 mark. The disordered stretch occupies residues 258-286 (TESVSVPRAPTPGERSEPPKVSGPPLSTE). An RING-type zinc finger spans residues 298 to 333 (CKVCMDKDVSMLFVPCGHLVVCTECAPNLRHCPICR).

The protein belongs to the IAP family. Post-translationally, auto-ubiquitinated, and degraded in a 2-step mechanism; a caspase-independent first step and a caspase-dependent second step. In terms of processing, phosphorylated via MAPK-dependent and CDK-dependent pathways during oocyte maturation. Phosphorylation does not appear to affect caspase inhibition or autoubiquitination activity.

It localises to the cytoplasm. It catalyses the reaction S-ubiquitinyl-[E2 ubiquitin-conjugating enzyme]-L-cysteine + [acceptor protein]-L-lysine = [E2 ubiquitin-conjugating enzyme]-L-cysteine + N(6)-ubiquitinyl-[acceptor protein]-L-lysine.. In terms of biological role, weak apoptotic suppressor. Has E3 ubiquitin-protein ligase activity. Weak inhibitor of caspase activity. This chain is Baculoviral IAP repeat-containing protein 7-B (birc7-b), found in Xenopus laevis (African clawed frog).